Reading from the N-terminus, the 142-residue chain is Protein lin-32 (142 aa).

Residues 30-48 (PLQSPNFSLDSPNYPDSLS) show a composition bias toward polar residues. Residues 30-66 (PLQSPNFSLDSPNYPDSLSNGGGKDDKKKCRRYKTPS) are disordered. One can recognise a bHLH domain in the interval 72 to 124 (MRRSAANERERRRMNTLNVAYDELREVLPEIDSGKKLSKFETLQMAQKYIECL).

As to quaternary structure, forms a heterodimer with hlh-2. Expressed in PVD motor neurons.

It localises to the nucleus. Its function is as follows. Probable transcription factor which binds the E box motif 5'-CA[TC][AG]TG-3'. Essential for the specification of the neuroblast cell fate in the development of peripheral sense organs. Its role in the generation of sensory neurons may be through positively regulating the expression of the zinc finger protein ztf-11 during postdeirid neurogenesis. Required for specification of cell fate, acting in concert with lin-32, in the development of the male-specific genital sensilla (simple sense organs) known as rays. Involved in regulating glial specification, perhaps by suppressing a glial fate in different lineages during early embryogenesis. This chain is Protein lin-32, found in Caenorhabditis elegans.